Reading from the N-terminus, the 128-residue chain is DELTA-urthionin-Uf1a (128 aa).

A signal peptide spans 1-24 (MEGKTVIVSLLLLSIVVGQIQVEA). Intrachain disulfides connect C27–C64, C28–C56, and C40–C50. The propeptide at 67–128 (LSIPEVTGEA…LCTKNSIETA (62 aa)) is acidic domain.

Belongs to the plant thionin (TC 1.C.44) family. Expressed in trichomes, that are stiff epidermal hairs located on the surface of petioles and leaves.

It localises to the secreted. In terms of biological role, plant defense protein that causes pain by probable disruption of cell membranes. Shows cytotoxic activity against the neuroblastoma cell line SH-SY5Y and slightly weaker activity against several non-neuronal cell lines. In vivo, intraplantar injection into mice causes several nocifensive responses, along with swelling and redness. This is DELTA-urthionin-Uf1a from Urtica ferox (Tree nettle).